The sequence spans 299 residues: Sugar transporter SWEET1 (299 aa).

One can recognise a MtN3/slv 1 domain in the interval 7-91; it reads QVLSISAITT…CVFFLIYSLP (85 aa). A run of 7 helical transmembrane segments spans residues 8-28, 36-56, 67-87, 95-115, 124-144, 155-175, and 180-200; these read VLSI…IPIC, AVGD…SFWL, MIIV…FFLI, FTCQ…WIAL, VICM…LGVV, LPMC…GNLV, and IIIP…LFVV. The region spanning 121–205 is the MtN3/slv 2 domain; that stretch reads YLGVICMTFN…ALFVVLPIRE (85 aa). A disordered region spans residues 230 to 299; the sequence is RGDCIVSSPP…DPDLSSIQSP (70 aa). Basic and acidic residues predominate over residues 247 to 261; that stretch reads NETRSDVEDKFDKLM. Residues 276 to 299 are compositionally biased toward low complexity; that stretch reads SMGSPPSYKSRSSSDPDLSSIQSP.

Belongs to the SWEET sugar transporter family.

It localises to the golgi apparatus membrane. The protein localises to the cell membrane. Its function is as follows. Mediates both low-affinity uptake and efflux of sugar across the membrane. The sequence is that of Sugar transporter SWEET1 (swt-1) from Caenorhabditis elegans.